Here is a 191-residue protein sequence, read N- to C-terminus: Dephospho-CoA kinase (191 aa).

In terms of domain architecture, DPCK spans 3–191; sequence AIGITGSYAS…KLIKDLECRV (189 aa). ATP is bound at residue 11–16; sequence ASGKTF.

This sequence belongs to the CoaE family.

The protein localises to the cytoplasm. The enzyme catalyses 3'-dephospho-CoA + ATP = ADP + CoA + H(+). The protein operates within cofactor biosynthesis; coenzyme A biosynthesis; CoA from (R)-pantothenate: step 5/5. Functionally, catalyzes the phosphorylation of the 3'-hydroxyl group of dephosphocoenzyme A to form coenzyme A. The protein is Dephospho-CoA kinase of Rickettsia prowazekii (strain Madrid E).